The sequence spans 131 residues: Small ribosomal subunit protein uS8 (131 aa).

The tract at residues 1–27 (MSMTDPVADMLTRIRNGQRASKNEVSM) is disordered.

It belongs to the universal ribosomal protein uS8 family. In terms of assembly, part of the 30S ribosomal subunit. Contacts proteins S5 and S12.

One of the primary rRNA binding proteins, it binds directly to 16S rRNA central domain where it helps coordinate assembly of the platform of the 30S subunit. In Thioalkalivibrio sulfidiphilus (strain HL-EbGR7), this protein is Small ribosomal subunit protein uS8.